The sequence spans 835 residues: Microcephalin (835 aa).

The 93-residue stretch at 1–93 folds into the BRCT 1 domain; the sequence is MAAPILKDVV…AHIDESLFPA (93 aa). Residues Ser-279, Ser-287, Ser-296, and Ser-333 each carry the phosphoserine modification. 2 disordered regions span residues 332–376 and 417–442; these read LSPT…RKRS and SPDNLKERNSENLPPESQLPSSPAQF. Thr-335 carries the phosphothreonine modification. Basic residues predominate over residues 343–361; sequence LLIHSRPRSSSVKRKRVSH. Residue Ser-548 is modified to Phosphoserine. A disordered region spans residues 555–583; sequence AVDLKSTQNKGTTSKISNSSEGEAQSEHE. Positions 559–577 are enriched in polar residues; that stretch reads KSTQNKGTTSKISNSSEGE. BRCT domains follow at residues 640–730 and 751–833; these read SGRG…PFEL and YRGT…NYLL.

In terms of assembly, interacts with CDC27 and maybe other components of the APC/C complex. Interacts with histone variant H2AX under DNA damage conditions.

The protein localises to the cytoplasm. It is found in the cytoskeleton. Its subcellular location is the microtubule organizing center. It localises to the centrosome. In terms of biological role, implicated in chromosome condensation and DNA damage induced cellular responses. May play a role in neurogenesis and regulation of the size of the cerebral cortex. This is Microcephalin from Pan troglodytes (Chimpanzee).